A 67-amino-acid chain; its full sequence is Large ribosomal subunit protein uL29 (67 aa).

Belongs to the universal ribosomal protein uL29 family.

This Gemmatimonas aurantiaca (strain DSM 14586 / JCM 11422 / NBRC 100505 / T-27) protein is Large ribosomal subunit protein uL29.